The primary structure comprises 593 residues: ESX-1 secretion system protein EccCb1 (593 aa).

FtsK domains follow at residues 66–260 and 350–546; these read RQEV…NETQ and QVPL…EKND. ATP-binding positions include 85–92 and 377–384; these read GAPQTGKS and GAPKSGKT.

In terms of assembly, part of the ESX-1 / type VII secretion system (T7SS), which is composed of cytosolic and membrane components. The ESX-1 membrane complex is composed of EccB1, EccCa1, EccCb1, EccD1 and EccE1.

It is found in the cytoplasm. Functionally, part of the ESX-1 / type VII specialized secretion system (T7SS), which exports several proteins including EsxA and EsxB. Plays a role in DNA conjugation, in both donor and recipient strains. The protein is ESX-1 secretion system protein EccCb1 of Mycolicibacterium smegmatis (strain ATCC 700084 / mc(2)155) (Mycobacterium smegmatis).